The primary structure comprises 464 residues: Glycosyl hydrolase family 109 protein 1 (464 aa).

A signal peptide spans 1 to 16 (MFKHLNALFIGLALFA). Cysteine 17 carries N-palmitoyl cysteine lipidation. Cysteine 17 is lipidated: S-diacylglycerol cysteine. NAD(+)-binding positions include 63-64 (MR), aspartate 85, 134-137 (WKHH), 154-155 (EV), and asparagine 183. Residues tyrosine 212, arginine 228, 240–243 (YATH), and tyrosine 318 contribute to the substrate site. Tyrosine 240 lines the NAD(+) pocket.

This sequence belongs to the Gfo/Idh/MocA family. Glycosyl hydrolase 109 subfamily. NAD(+) is required as a cofactor.

It is found in the cell membrane. Functionally, glycosidase. Has no alpha-N-acetylgalactosaminidase activity. The chain is Glycosyl hydrolase family 109 protein 1 from Bacteroides fragilis (strain ATCC 25285 / DSM 2151 / CCUG 4856 / JCM 11019 / LMG 10263 / NCTC 9343 / Onslow / VPI 2553 / EN-2).